A 238-amino-acid chain; its full sequence is Flagellar L-ring protein (238 aa).

The signal sequence occupies residues 1–23 (MIKLFICQKKYYLTAIFLLTIQS). The N-palmitoyl cysteine moiety is linked to residue Cys-24. The S-diacylglycerol cysteine moiety is linked to residue Cys-24.

The protein belongs to the FlgH family. The basal body constitutes a major portion of the flagellar organelle and consists of four rings (L,P,S, and M) mounted on a central rod.

The protein localises to the cell outer membrane. Its subcellular location is the bacterial flagellum basal body. Its function is as follows. Assembles around the rod to form the L-ring and probably protects the motor/basal body from shearing forces during rotation. In Buchnera aphidicola subsp. Acyrthosiphon pisum (strain 5A), this protein is Flagellar L-ring protein.